A 350-amino-acid chain; its full sequence is Selenide, water dikinase (350 aa).

Sec15 is an active-site residue. A non-standard amino acid (selenocysteine) is located at residue Sec15. ATP is bound by residues Lys18 and 47 to 49 (HNE). Asp50 provides a ligand contact to Mg(2+). ATP is bound by residues Asp67, Asp90, and 138 to 140 (GHS). Residue Asp90 participates in Mg(2+) binding. A Mg(2+)-binding site is contributed by Asp227.

The protein belongs to the selenophosphate synthase 1 family. Class I subfamily. Homodimer. It depends on Mg(2+) as a cofactor.

It catalyses the reaction hydrogenselenide + ATP + H2O = selenophosphate + AMP + phosphate + 2 H(+). Its function is as follows. Synthesizes selenophosphate from selenide and ATP. The polypeptide is Selenide, water dikinase (Nitratidesulfovibrio vulgaris (strain DSM 19637 / Miyazaki F) (Desulfovibrio vulgaris)).